The following is a 352-amino-acid chain: Minor capsid protein P14 (352 aa).

A disordered region spans residues 122–214 (YNEPAPKPKP…RPARRCDENP (93 aa)). Positions 129-145 (PKPKPKPKPAPKPKPAP) are enriched in basic residues. Pro residues predominate over residues 146–204 (KPKPAPKPAPKPAPKPAPKPAPKPAPKPAPKPAPEPAPEPAPEPAPKPAPEPAPEPAPI). The hydrophobic stretch occupies residues 244 to 264 (WWLWGGIAILVIVLMIGGYFI).

Interacts with the major capsid protein.

It localises to the virion. Functionally, one of the minor capsid proteins that constitute a network internal to the major capsid proteins and outside the lipid membrane. The minor capsid protein P14 does not serve a cross-linking function between neighboring capsomers, it may play a role in the viral capsid assembly. The polypeptide is Minor capsid protein P14 (Chlorella (PBCV-1)).